The chain runs to 268 residues: Phosphate import ATP-binding protein PstB 3 (268 aa).

One can recognise an ABC transporter domain in the interval 15–254 (LRTENLNVYY…DATESIFNNP (240 aa)). 47-54 (GPSGCGKS) is a binding site for ATP.

This sequence belongs to the ABC transporter superfamily. Phosphate importer (TC 3.A.1.7) family. As to quaternary structure, the complex is composed of two ATP-binding proteins (PstB), two transmembrane proteins (PstC and PstA) and a solute-binding protein (PstS).

It localises to the cell inner membrane. The enzyme catalyses phosphate(out) + ATP + H2O = ADP + 2 phosphate(in) + H(+). Its function is as follows. Part of the ABC transporter complex PstSACB involved in phosphate import. Responsible for energy coupling to the transport system. In Nostoc sp. (strain PCC 7120 / SAG 25.82 / UTEX 2576), this protein is Phosphate import ATP-binding protein PstB 3.